The primary structure comprises 843 residues: Taste receptor type 1 member 2 (843 aa).

Residues 1-19 (MGPQARTLHLLFLLLHALP) form the signal peptide. Residues 20–570 (KPVMLVGNSD…AFLEWHEVPT (551 aa)) are Extracellular-facing. N-linked (GlcNAc...) asparagine glycosylation is found at Asn-87, Asn-296, Asn-316, Asn-355, Asn-372, Asn-432, Asn-484, Asn-491, and Asn-531. Residues 571–591 (IVVTILAALGFISTLAILLIF) form a helical membrane-spanning segment. The Cytoplasmic portion of the chain corresponds to 592 to 606 (WRHFQTPMVRSAGGP). The helical transmembrane segment at 607 to 627 (MCFLMLVPLLLAFGMVPVYVG) threads the bilayer. Residues 628 to 642 (PPTVFSCFCRQAFFT) lie on the Extracellular side of the membrane. The helical transmembrane segment at 643–663 (VCFSVCLSCITVRSFQIVCVF) threads the bilayer. Residues 664-682 (KMARRLPSAYGFWMRYHGP) lie on the Cytoplasmic side of the membrane. The helical transmembrane segment at 683–703 (YVFVAFITAVKVALVAGNMLA) threads the bilayer. Topologically, residues 704–731 (TTINPIGRTDPDDPNIIILSCHPNYRNG) are extracellular. The chain crosses the membrane as a helical span at residues 732–752 (LLFNTSMDLLLSVLGFSFAYV). Residues 753–764 (GKELPTNYNEAK) are Cytoplasmic-facing. Residues 765–785 (FITLSMTFSFTSSISLCTFMS) form a helical membrane-spanning segment. The Extracellular segment spans residues 786–789 (VHDG). A helical membrane pass occupies residues 790–810 (VLVTIMDLLVTVLNFLAIGLG). Residues 811-843 (YFGPKCYMILFYPERNTSAYFNSMIQGYTMRKS) lie on the Cytoplasmic side of the membrane.

This sequence belongs to the G-protein coupled receptor 3 family. TAS1R subfamily. As to quaternary structure, forms heterodimers with TAS1R3. Expressed mainly in circumvallate and foliate taste papillae.

Its subcellular location is the cell membrane. Putative taste receptor. TAS1R2/TAS1R3 recognizes diverse natural and synthetic sweeteners. This is Taste receptor type 1 member 2 (Tas1r2) from Mus musculus (Mouse).